The chain runs to 105 residues: Large ribosomal subunit protein uL24 (105 aa).

Belongs to the universal ribosomal protein uL24 family. Part of the 50S ribosomal subunit.

Its function is as follows. One of two assembly initiator proteins, it binds directly to the 5'-end of the 23S rRNA, where it nucleates assembly of the 50S subunit. Functionally, one of the proteins that surrounds the polypeptide exit tunnel on the outside of the subunit. The protein is Large ribosomal subunit protein uL24 of Methylobacterium sp. (strain 4-46).